The chain runs to 431 residues: Enolase (431 aa).

Gln167 serves as a coordination point for (2R)-2-phosphoglycerate. Catalysis depends on Glu209, which acts as the Proton donor. Residues Asp246, Glu289, and Asp316 each coordinate Mg(2+). Lys341, Arg370, Ser371, and Lys392 together coordinate (2R)-2-phosphoglycerate. The active-site Proton acceptor is the Lys341.

This sequence belongs to the enolase family. Component of the RNA degradosome, a multiprotein complex involved in RNA processing and mRNA degradation. The cofactor is Mg(2+).

Its subcellular location is the cytoplasm. The protein localises to the secreted. The protein resides in the cell surface. It carries out the reaction (2R)-2-phosphoglycerate = phosphoenolpyruvate + H2O. It participates in carbohydrate degradation; glycolysis; pyruvate from D-glyceraldehyde 3-phosphate: step 4/5. Catalyzes the reversible conversion of 2-phosphoglycerate (2-PG) into phosphoenolpyruvate (PEP). It is essential for the degradation of carbohydrates via glycolysis. The polypeptide is Enolase (Shewanella sp. (strain ANA-3)).